Consider the following 310-residue polypeptide: Olfactory receptor 9A2 (310 aa).

The Extracellular segment spans residues 1 to 24 (MMDNHSSATEFHLLGFPGSQGLHH). Asn-4 carries N-linked (GlcNAc...) asparagine glycosylation. A helical transmembrane segment spans residues 25–45 (ILFAIFFFFYLVTLMGNTVII). Over 46–53 (VIVCVDKR) the chain is Cytoplasmic. Residues 54 to 74 (LQSPMYFFLSHLSTLEILVTT) form a helical membrane-spanning segment. Over 75–98 (IIVPMMLWGLLFLGCRQYLSLHVS) the chain is Extracellular. At 117–135 (DRYVAVCNPLRYNIIMNSS) the chain is on the cytoplasmic side. A helical membrane pass occupies residues 136–156 (TCIWVVIVSWVFGFLSEIWPI). The Extracellular portion of the chain corresponds to 157-193 (YATFQFTFRKSNSLDHFYCDRGQLLKLSCDNTLLTEF). A helical membrane pass occupies residues 194–213 (ILFLMAVFILIGSLIPTIVS). Residues 214-233 (YTYIISTILKIPSASGRRKA) are Cytoplasmic-facing. A helical membrane pass occupies residues 234–254 (FSTFASHFTCVVIGYGSCLFL). Topologically, residues 255–267 (YVKPKQTQGVEYN) are extracellular. A helical membrane pass occupies residues 268-288 (KIVSLLVSVLTPFLNPFIFTL). Over 289 to 310 (RNDKVKEALRDGMKRCCQLLKD) the chain is Cytoplasmic.

Belongs to the G-protein coupled receptor 1 family.

The protein resides in the cell membrane. In terms of biological role, odorant receptor. The protein is Olfactory receptor 9A2 (OR9A2) of Homo sapiens (Human).